A 71-amino-acid polypeptide reads, in one-letter code: UPF0346 protein SPP_0954 (71 aa).

Belongs to the UPF0346 family.

The protein is UPF0346 protein SPP_0954 of Streptococcus pneumoniae (strain P1031).